The sequence spans 296 residues: MDELMGKCELLYEGKVREVYDCDDKLVMVATDRISAFDHILKNKVTEKGAILTQMSKFWFDYTKDVVANHMVSVDVNDMPEFFHKDEYIGRSMLCKKLTMLPVECIVRGYITGSGWASYKENGTVCGIKLPEGLKESEKLPEPIYTPSTKAEIGDHDENISFEKSIEVLEKQFPGKGLEYATKIKDATITLYKKCAEYALSKGIIIADTKFEFGLDENGEVVIGDEMLTPDSSRFWPLEGYEAGKSQPSYDKQFVRDWLKANPDSDYLLPDDVIEKTVEKYKEAYKLLTGKDFSRK.

Belongs to the SAICAR synthetase family.

The catalysed reaction is 5-amino-1-(5-phospho-D-ribosyl)imidazole-4-carboxylate + L-aspartate + ATP = (2S)-2-[5-amino-1-(5-phospho-beta-D-ribosyl)imidazole-4-carboxamido]succinate + ADP + phosphate + 2 H(+). It participates in purine metabolism; IMP biosynthesis via de novo pathway; 5-amino-1-(5-phospho-D-ribosyl)imidazole-4-carboxamide from 5-amino-1-(5-phospho-D-ribosyl)imidazole-4-carboxylate: step 1/2. This chain is Phosphoribosylaminoimidazole-succinocarboxamide synthase, found in Lachnospira eligens (strain ATCC 27750 / DSM 3376 / VPI C15-48 / C15-B4) (Eubacterium eligens).